Here is a 137-residue protein sequence, read N- to C-terminus: 2-iminobutanoate/2-iminopropanoate deaminase (137 aa).

Ser2 is modified (N-acetylserine). Lys13 and Lys67 each carry N6-succinyllysine. Thr74 is subject to Phosphothreonine. Ser136 is subject to Phosphoserine.

In terms of assembly, homotrimer. Interacts with YTHDF2. As to expression, expressed by various malignant neoplasms.

Its subcellular location is the cytoplasm. It localises to the nucleus. The protein resides in the peroxisome. The protein localises to the mitochondrion. It carries out the reaction 2-iminobutanoate + H2O = 2-oxobutanoate + NH4(+). The enzyme catalyses 2-iminopropanoate + H2O = pyruvate + NH4(+). In terms of biological role, catalyzes the hydrolytic deamination of enamine/imine intermediates that form during the course of normal metabolism. May facilitate the release of ammonia from these potentially toxic reactive metabolites, reducing their impact on cellular components. It may act on enamine/imine intermediates formed by several types of pyridoxal-5'-phosphate-dependent dehydratases including L-threonine dehydratase. Its function is as follows. Also promotes endoribonucleolytic cleavage of some transcripts by promoting recruitment of the ribonuclease P/MRP complex. Acts by bridging YTHDF2 and the ribonuclease P/MRP complex. RIDA/HRSP12 binds to N6-methyladenosine (m6A)-containing mRNAs containing a 5'-GGUUC-3' motif: cooperative binding of RIDA/HRSP12 and YTHDF2 to such transcripts lead to recruitment of the ribonuclease P/MRP complex and subsequent endoribonucleolytic cleavage. The sequence is that of 2-iminobutanoate/2-iminopropanoate deaminase from Capra hircus (Goat).